We begin with the raw amino-acid sequence, 335 residues long: Aspartate--ammonia ligase (335 aa).

The protein belongs to the class-II aminoacyl-tRNA synthetase family. AsnA subfamily.

The protein resides in the cytoplasm. The catalysed reaction is L-aspartate + NH4(+) + ATP = L-asparagine + AMP + diphosphate + H(+). Its pathway is amino-acid biosynthesis; L-asparagine biosynthesis; L-asparagine from L-aspartate (ammonia route): step 1/1. The sequence is that of Aspartate--ammonia ligase from Levilactobacillus brevis (strain ATCC 367 / BCRC 12310 / CIP 105137 / JCM 1170 / LMG 11437 / NCIMB 947 / NCTC 947) (Lactobacillus brevis).